Consider the following 155-residue polypeptide: Small ribosomal subunit protein uS7 (155 aa).

Belongs to the universal ribosomal protein uS7 family. Part of the 30S ribosomal subunit. Contacts proteins S9 and S11.

In terms of biological role, one of the primary rRNA binding proteins, it binds directly to 16S rRNA where it nucleates assembly of the head domain of the 30S subunit. Is located at the subunit interface close to the decoding center, probably blocks exit of the E-site tRNA. This chain is Small ribosomal subunit protein uS7, found in Corynebacterium aurimucosum (strain ATCC 700975 / DSM 44827 / CIP 107346 / CN-1) (Corynebacterium nigricans).